The following is a 373-amino-acid chain: Peptide chain release factor 2 (373 aa).

Q251 bears the N5-methylglutamine mark.

The protein belongs to the prokaryotic/mitochondrial release factor family. Post-translationally, methylated by PrmC. Methylation increases the termination efficiency of RF2.

The protein localises to the cytoplasm. In terms of biological role, peptide chain release factor 2 directs the termination of translation in response to the peptide chain termination codons UGA and UAA. The chain is Peptide chain release factor 2 from Salinispora arenicola (strain CNS-205).